Consider the following 353-residue polypeptide: 4-hydroxy-2-oxovalerate aldolase 1 (353 aa).

The region spanning 14–266 (VRMTDTSLRD…KTGIDFFDIA (253 aa)) is the Pyruvate carboxyltransferase domain. 22-23 (RD) provides a ligand contact to substrate. Mn(2+) is bound at residue Asp23. Residue His26 is the Proton acceptor of the active site. Residues Ser176 and His205 each contribute to the substrate site. His205 and His207 together coordinate Mn(2+). Tyr296 is a binding site for substrate.

It belongs to the 4-hydroxy-2-oxovalerate aldolase family.

It catalyses the reaction (S)-4-hydroxy-2-oxopentanoate = acetaldehyde + pyruvate. The chain is 4-hydroxy-2-oxovalerate aldolase 1 from Mycobacterium sp. (strain KMS).